The sequence spans 308 residues: Mannan endo-1,4-beta-mannosidase (308 aa).

Glutamate 125 acts as the Proton donor in catalysis. Residue glutamate 220 is the Nucleophile of the active site. The interval 284–308 (DGLQETSKPSTVFTDDNGGHPEPPT) is disordered. The span at 287–297 (QETSKPSTVFT) shows a compositional bias: polar residues.

This sequence belongs to the glycosyl hydrolase 5 (cellulase A) family.

It catalyses the reaction Random hydrolysis of (1-&gt;4)-beta-D-mannosidic linkages in mannans, galactomannans and glucomannans.. Catalyzes the endo hydrolysis of beta-1,4-linked mannan, galactomannan and glucomannan. It is able to hydrolyze mannosidic linkages that are flanked by mannose or glucose. This Salipaludibacillus agaradhaerens (Bacillus agaradhaerens) protein is Mannan endo-1,4-beta-mannosidase.